We begin with the raw amino-acid sequence, 143 residues long: Small ribosomal subunit protein bS6 (143 aa).

The disordered stretch occupies residues 97 to 143 (DTEQSLIMKSKDEKGDKHERSERRRRDDEEGDVPAATDTDGDNAEAA). Basic and acidic residues predominate over residues 105-124 (KSKDEKGDKHERSERRRRDD).

It belongs to the bacterial ribosomal protein bS6 family.

Functionally, binds together with bS18 to 16S ribosomal RNA. In Xanthomonas oryzae pv. oryzae (strain MAFF 311018), this protein is Small ribosomal subunit protein bS6.